Consider the following 294-residue polypeptide: DNA replication complex GINS protein SLD5 (294 aa).

This sequence belongs to the GINS4/SLD5 family. In terms of assembly, component of the GINS complex which is a heterotetramer composed of SLD5, PSF1, PSF2 and PSF3. Interacts with PSF2.

It localises to the nucleus. Functionally, required for DNA replication. Functions as part of the GINS complex which plays an essential role in the initiation of DNA replication by binding to DNA replication origins and facilitating the assembly of the DNA replication machinery. This Saccharomyces cerevisiae (strain ATCC 204508 / S288c) (Baker's yeast) protein is DNA replication complex GINS protein SLD5.